Reading from the N-terminus, the 343-residue chain is Globoside alpha-1,3-N-acetylgalactosaminyltransferase 1 (343 aa).

At 1–6 (MISRKA) the chain is on the cytoplasmic side. A helical; Signal-anchor for type II membrane protein membrane pass occupies residues 7–27 (LGSLVCLSAVATLIWIASGNW). The Lumenal segment spans residues 28-343 (KVHYLPYYLP…VDKNYQEVRN (316 aa)). N104 carries N-linked (GlcNAc...) asparagine glycosylation. Substrate is bound by residues 112 to 117 (FAVGKY), 202 to 204 (DID), and 224 to 227 (HPGY). Residues D202 and D204 each coordinate Mn(2+). The Nucleophile role is filled by E294.

It belongs to the glycosyltransferase 6 family. The cofactor is Mn(2+).

It is found in the golgi apparatus membrane. Its pathway is protein modification; protein glycosylation. Functionally, may catalyze the formation of some glycolipid via the addition of N-acetylgalactosamine (GalNAc) in alpha-1,3-linkage to some substrate. Glycolipids probably serve for adherence of some pathogens. The sequence is that of Globoside alpha-1,3-N-acetylgalactosaminyltransferase 1 from Gallus gallus (Chicken).